A 522-amino-acid polypeptide reads, in one-letter code: MAEFPEPGTVNPDSDLSNGRAEKPEIDTSAPFESVREAATRFGGFGFWRPSLNKLPDASQENIQEPDIMGLKAQAFELQRELIVKERETLEVLKELEATKATVLKLQQRNEAYEEDTLREEVDSHIKPAGVVLKDLSQAKMNLCKIASIRESVEQLKNKLNEERAALEKTRERLMEKSLKVFSLEEEEVRVRFAKEGQTGEKDLGMLNEVQRLSRQAQEVKKTGENAELEVVKAMAETESTRDKIRTAKIRLVAARKMKEAAREAEAVAIAEIEAVTGSMNVGKAEAVTISAEEYSVLARSARDAEEEARKRVEDAMSRVEEANVSKKDVLKKVDEAAQEIETSKRVLEEAVERVDAANASKIEAEEALRKWRSENGQRRRLSSSVNNTSKFKSRRETTTRLMDVNGLHLTYDVVDGSSSSSTVPVLKPTMSIGQILSKKLLLAEDSDMNVANERRKMSLGQMLAKNSSSDKTVSKRSEGKENEKRTKTRKRKSFGFAKISVLLNKESKNKKKKKKIALNLR.

Positions 1-32 (MAEFPEPGTVNPDSDLSNGRAEKPEIDTSAPF) are disordered. 2 coiled-coil regions span residues 77–264 (ELQR…AARE) and 299–376 (ARSA…RSEN). Disordered regions lie at residues 374-397 (SENG…SRRE) and 458-493 (MSLG…RKRK). Positions 473–486 (TVSKRSEGKENEKR) are enriched in basic and acidic residues.

Belongs to the WEB family.

In Arabidopsis thaliana (Mouse-ear cress), this protein is WEB family protein At2g38370.